The primary structure comprises 244 residues: 3-oxoacyl-[acyl-carrier-protein] reductase FabG (244 aa).

Residues 12–15 (GASR), threonine 37, 59–60 (NV), and asparagine 86 contribute to the NADP(+) site. Substrate is bound at residue serine 138. Tyrosine 151 acts as the Proton acceptor in catalysis. Residues 151 to 155 (YAAAK) and isoleucine 184 contribute to the NADP(+) site.

It belongs to the short-chain dehydrogenases/reductases (SDR) family. Homotetramer.

The catalysed reaction is a (3R)-hydroxyacyl-[ACP] + NADP(+) = a 3-oxoacyl-[ACP] + NADPH + H(+). It participates in lipid metabolism; fatty acid biosynthesis. Functionally, catalyzes the NADPH-dependent reduction of beta-ketoacyl-ACP substrates to beta-hydroxyacyl-ACP products, the first reductive step in the elongation cycle of fatty acid biosynthesis. The polypeptide is 3-oxoacyl-[acyl-carrier-protein] reductase FabG (fabG) (Vibrio cholerae serotype O1 (strain ATCC 39315 / El Tor Inaba N16961)).